Reading from the N-terminus, the 736-residue chain is 1,4-alpha-glucan branching enzyme GlgB (736 aa).

Residue aspartate 415 is the Nucleophile of the active site. Catalysis depends on glutamate 470, which acts as the Proton donor.

This sequence belongs to the glycosyl hydrolase 13 family. GlgB subfamily. In terms of assembly, monomer.

The catalysed reaction is Transfers a segment of a (1-&gt;4)-alpha-D-glucan chain to a primary hydroxy group in a similar glucan chain.. It functions in the pathway glycan biosynthesis; glycogen biosynthesis. Its function is as follows. Catalyzes the formation of the alpha-1,6-glucosidic linkages in glycogen by scission of a 1,4-alpha-linked oligosaccharide from growing alpha-1,4-glucan chains and the subsequent attachment of the oligosaccharide to the alpha-1,6 position. This is 1,4-alpha-glucan branching enzyme GlgB from Paraburkholderia xenovorans (strain LB400).